The sequence spans 261 residues: Ribonuclease HII (261 aa).

Residues 71–259 enclose the RNase H type-2 domain; that stretch reads QYIAGVDEVG…VKEAKLHFES (189 aa). Positions 77, 78, and 169 each coordinate a divalent metal cation.

Belongs to the RNase HII family. Mn(2+) serves as cofactor. Requires Mg(2+) as cofactor.

The protein resides in the cytoplasm. It catalyses the reaction Endonucleolytic cleavage to 5'-phosphomonoester.. Functionally, endonuclease that specifically degrades the RNA of RNA-DNA hybrids. The chain is Ribonuclease HII from Listeria innocua serovar 6a (strain ATCC BAA-680 / CLIP 11262).